Consider the following 104-residue polypeptide: Protamine-3 (104 aa).

Positions 1–104 (MGSRCAKLST…PSPEPKQKHS (104 aa)) are disordered. Residues 45–70 (EGEEEEEDEEDEEEEDDDEEDEEEEQ) are compositionally biased toward acidic residues. Ser96 bears the Phosphoserine mark.

Belongs to the protamine P3 family. As to expression, testis.

The protein resides in the nucleus. The protein localises to the chromosome. Protamines substitute for histones in the chromatin of sperm during the haploid phase of spermatogenesis. They compact sperm DNA into a highly condensed, stable and inactive complex. The sequence is that of Protamine-3 (Prm3) from Rattus norvegicus (Rat).